Here is a 618-residue protein sequence, read N- to C-terminus: Cytosolic Fe-S cluster assembly factor NAR1 (618 aa).

C20, C61, C64, C67, C212, C267, C471, and C475 together coordinate [4Fe-4S] cluster. Disordered regions lie at residues 495-516 and 530-560; these read TSSI…TPQE and SADS…PESR.

The protein belongs to the NARF family.

Functionally, component of the cytosolic Fe/S protein assembly machinery. Required for maturation of extramitochondrial Fe/S proteins. May play a role in the transfer of pre-assembled Fe/S clusters to target apoproteins. The sequence is that of Cytosolic Fe-S cluster assembly factor NAR1 (NAR1) from Coccidioides immitis (strain RS) (Valley fever fungus).